The primary structure comprises 158 residues: Glutathione peroxidase homolog BsaA (158 aa).

Cys-36 is an active-site residue.

It belongs to the glutathione peroxidase family.

This Staphylococcus epidermidis (strain ATCC 12228 / FDA PCI 1200) protein is Glutathione peroxidase homolog BsaA (bsaA).